The chain runs to 99 residues: Plastocyanin (99 aa).

The region spanning 1–99 (VEILLGGEDG…AGMVGKVTVN (99 aa)) is the Plastocyanin-like domain. Residues histidine 37, cysteine 84, histidine 87, and methionine 92 each coordinate Cu cation.

Belongs to the plastocyanin family. Requires Cu(2+) as cofactor.

Its subcellular location is the plastid. It localises to the chloroplast thylakoid membrane. In terms of biological role, participates in electron transfer between P700 and the cytochrome b6-f complex in photosystem I. This Sambucus nigra (European elder) protein is Plastocyanin (PETE).